The primary structure comprises 72 residues: Translation initiation factor IF-1 (72 aa).

The region spanning Met1–Lys72 is the S1-like domain.

This sequence belongs to the IF-1 family. In terms of assembly, component of the 30S ribosomal translation pre-initiation complex which assembles on the 30S ribosome in the order IF-2 and IF-3, IF-1 and N-formylmethionyl-tRNA(fMet); mRNA recruitment can occur at any time during PIC assembly.

It localises to the cytoplasm. One of the essential components for the initiation of protein synthesis. Stabilizes the binding of IF-2 and IF-3 on the 30S subunit to which N-formylmethionyl-tRNA(fMet) subsequently binds. Helps modulate mRNA selection, yielding the 30S pre-initiation complex (PIC). Upon addition of the 50S ribosomal subunit IF-1, IF-2 and IF-3 are released leaving the mature 70S translation initiation complex. This chain is Translation initiation factor IF-1, found in Chlorobium phaeovibrioides (strain DSM 265 / 1930) (Prosthecochloris vibrioformis (strain DSM 265)).